Reading from the N-terminus, the 116-residue chain is Peptidyl-tRNA hydrolase (116 aa).

It belongs to the PTH2 family.

Its subcellular location is the cytoplasm. It catalyses the reaction an N-acyl-L-alpha-aminoacyl-tRNA + H2O = an N-acyl-L-amino acid + a tRNA + H(+). In terms of biological role, the natural substrate for this enzyme may be peptidyl-tRNAs which drop off the ribosome during protein synthesis. The protein is Peptidyl-tRNA hydrolase of Methanococcus vannielii (strain ATCC 35089 / DSM 1224 / JCM 13029 / OCM 148 / SB).